The sequence spans 238 residues: uncharacterized protein (238 aa).

2 disordered regions span residues 123 to 167 and 180 to 238; these read FRQG…VHGG and SAMG…AKRR. A compositionally biased stretch (low complexity) spans 152–161; sequence SGHSPSPGRH. Over residues 207–238 the composition is skewed to basic residues; the sequence is HRGHGHRFRLLAPRSRPRQRRGGGSRAAAKRR.

The protein belongs to the PNP/MTAP phosphorylase family.

This is an uncharacterized protein from Rhodospirillum rubrum.